Reading from the N-terminus, the 128-residue chain is Flagellar basal body rod protein FlgB (128 aa).

The protein belongs to the flagella basal body rod proteins family. As to quaternary structure, the basal body constitutes a major portion of the flagellar organelle and consists of a number of rings mounted on a central rod. In Gram-negative bacteria, at least four rings, L, P, S and M are present, whereas Gram-positive bacteria lack the L and P rings. The rod consists of about 26 subunits of FlgG in the distal portion, and FlgB, FlgC and FlgF build up the proximal portion of the rod with about 6 subunits each. Rod assembly occurs by export via the flagellum-specific pathway of its constituent proteins and by their incorporation into the rod structure in the probable order of FlgB, FlgC, FlgF and FlgG. Another protein, FliE, also assembles onto the stable rod structure.

The protein resides in the bacterial flagellum basal body. Its function is as follows. Structural component of flagellum, the bacterial motility apparatus. Part of the rod structure of flagellar basal body. This is Flagellar basal body rod protein FlgB from Cereibacter sphaeroides (Rhodobacter sphaeroides).